An 846-amino-acid polypeptide reads, in one-letter code: Translation initiation factor IF-2 (846 aa).

The disordered stretch occupies residues 198 to 219 (YKREEEEKKSKAKKAGGKGFKK). A compositionally biased stretch (basic residues) spans 207–219 (SKAKKAGGKGFKK). Residues 345–512 (SRAPVVTIMG…AVLLQSEVLE (168 aa)) form the tr-type G domain. Positions 354–361 (GHVDHGKT) are G1. Residue 354–361 (GHVDHGKT) coordinates GTP. Positions 379–383 (GITQH) are G2. A G3 region spans residues 400–403 (DTPG). Residues 400–404 (DTPGH) and 454–457 (NKID) contribute to the GTP site. A G4 region spans residues 454–457 (NKID). Positions 490–492 (SAK) are G5.

This sequence belongs to the TRAFAC class translation factor GTPase superfamily. Classic translation factor GTPase family. IF-2 subfamily.

Its subcellular location is the cytoplasm. In terms of biological role, one of the essential components for the initiation of protein synthesis. Protects formylmethionyl-tRNA from spontaneous hydrolysis and promotes its binding to the 30S ribosomal subunits. Also involved in the hydrolysis of GTP during the formation of the 70S ribosomal complex. The polypeptide is Translation initiation factor IF-2 (Francisella tularensis subsp. novicida (strain U112)).